A 393-amino-acid chain; its full sequence is uncharacterized protein (393 aa).

[4Fe-4S] cluster-binding residues include Cys-9, Cys-15, Cys-18, and Cys-97. Residues Gln-231, Tyr-258, Glu-279, and Asp-325 each coordinate S-adenosyl-L-methionine. Cys-352 (nucleophile) is an active-site residue.

Belongs to the class I-like SAM-binding methyltransferase superfamily. RNA M5U methyltransferase family.

This is an uncharacterized protein from Leptospira interrogans serogroup Icterohaemorrhagiae serovar Lai (strain 56601).